Here is a 689-residue protein sequence, read N- to C-terminus: Glycine--tRNA ligase beta subunit (689 aa).

Belongs to the class-II aminoacyl-tRNA synthetase family. In terms of assembly, tetramer of two alpha and two beta subunits.

Its subcellular location is the cytoplasm. It carries out the reaction tRNA(Gly) + glycine + ATP = glycyl-tRNA(Gly) + AMP + diphosphate. The protein is Glycine--tRNA ligase beta subunit of Cronobacter sakazakii (strain ATCC BAA-894) (Enterobacter sakazakii).